The primary structure comprises 233 residues: MIPWLGPEPVFPPVSQALSHPNGLLAAGGDLSSRRILTAYSEGIFPWFSDGEPILWWSPAPRMVMFPDELKVSRSLAKTLRNLDYEIRVDSAFPEVMRACAEPRAGQDGTWIVPEMVAAYCRLHQIGYAHSFETWIDGELAGGLYGVSIGRMFYGESMFSRRRDASKLAFVHMVRHLQAQGVTMIDCQMHTEHLASLGARLISRDVFLATLKENVRHPQPDRMWDYHYRHESS.

Belongs to the L/F-transferase family.

It localises to the cytoplasm. The enzyme catalyses N-terminal L-lysyl-[protein] + L-leucyl-tRNA(Leu) = N-terminal L-leucyl-L-lysyl-[protein] + tRNA(Leu) + H(+). It catalyses the reaction N-terminal L-arginyl-[protein] + L-leucyl-tRNA(Leu) = N-terminal L-leucyl-L-arginyl-[protein] + tRNA(Leu) + H(+). The catalysed reaction is L-phenylalanyl-tRNA(Phe) + an N-terminal L-alpha-aminoacyl-[protein] = an N-terminal L-phenylalanyl-L-alpha-aminoacyl-[protein] + tRNA(Phe). In terms of biological role, functions in the N-end rule pathway of protein degradation where it conjugates Leu, Phe and, less efficiently, Met from aminoacyl-tRNAs to the N-termini of proteins containing an N-terminal arginine or lysine. The protein is Leucyl/phenylalanyl-tRNA--protein transferase of Chromobacterium violaceum (strain ATCC 12472 / DSM 30191 / JCM 1249 / CCUG 213 / NBRC 12614 / NCIMB 9131 / NCTC 9757 / MK).